The sequence spans 80 residues: UPF0125 protein XF_2346 (80 aa).

It belongs to the UPF0125 (RnfH) family.

The protein is UPF0125 protein XF_2346 of Xylella fastidiosa (strain 9a5c).